We begin with the raw amino-acid sequence, 623 residues long: Endoglucanase 12 (623 aa).

The Cytoplasmic portion of the chain corresponds to 1–73 (MYSANHWGGS…LGCVVVKRKL (73 aa)). A helical; Signal-anchor for type II membrane protein transmembrane segment spans residues 74–94 (LWWVLWTLLAAFILIGLPVII). The Extracellular portion of the chain corresponds to 95-623 (AKSIPKKKPH…TPPPPSKWKP (529 aa)). Residue Asp166 is the Nucleophile of the active site. 6 N-linked (GlcNAc...) asparagine glycosylation sites follow: Asn217, Asn236, Asn324, Asn345, Asn408, and Asn425. Residues His513, Asp561, and Glu570 contribute to the active site.

Belongs to the glycosyl hydrolase 9 (cellulase E) family. In terms of tissue distribution, ubiquitous.

The protein localises to the membrane. It catalyses the reaction Endohydrolysis of (1-&gt;4)-beta-D-glucosidic linkages in cellulose, lichenin and cereal beta-D-glucans.. The polypeptide is Endoglucanase 12 (GLU3) (Oryza sativa subsp. japonica (Rice)).